The chain runs to 319 residues: Thioredoxin reductase (319 aa).

37–44 is an FAD binding site; the sequence is ERGVPGGQ. A disulfide bridge links C136 with C139. 279–288 contacts FAD; that stretch reads DVRAKSLRQI.

The protein belongs to the class-II pyridine nucleotide-disulfide oxidoreductase family. Homodimer. FAD serves as cofactor.

It is found in the cytoplasm. The enzyme catalyses [thioredoxin]-dithiol + NADP(+) = [thioredoxin]-disulfide + NADPH + H(+). The sequence is that of Thioredoxin reductase (trxB) from Listeria innocua serovar 6a (strain ATCC BAA-680 / CLIP 11262).